The chain runs to 467 residues: ATP-dependent protease ATPase subunit HslU (467 aa).

Residues V20, 62–67, D280, E345, and R417 contribute to the ATP site; that span reads GVGKTE.

The protein belongs to the ClpX chaperone family. HslU subfamily. In terms of assembly, a double ring-shaped homohexamer of HslV is capped on each side by a ring-shaped HslU homohexamer. The assembly of the HslU/HslV complex is dependent on binding of ATP.

The protein resides in the cytoplasm. Its function is as follows. ATPase subunit of a proteasome-like degradation complex; this subunit has chaperone activity. The binding of ATP and its subsequent hydrolysis by HslU are essential for unfolding of protein substrates subsequently hydrolyzed by HslV. HslU recognizes the N-terminal part of its protein substrates and unfolds these before they are guided to HslV for hydrolysis. The sequence is that of ATP-dependent protease ATPase subunit HslU from Enterococcus faecalis (strain ATCC 700802 / V583).